The following is a 491-amino-acid chain: 3-octaprenyl-4-hydroxybenzoate carboxy-lyase (491 aa).

Asn-172 contributes to the Mn(2+) binding site. Prenylated FMN is bound by residues 175-177 (IYR), 189-191 (RWL), and 194-195 (RG). Glu-238 provides a ligand contact to Mn(2+). Asp-287 functions as the Proton donor in the catalytic mechanism.

Belongs to the UbiD family. Homohexamer. Prenylated FMN is required as a cofactor. The cofactor is Mn(2+).

It localises to the cell membrane. It carries out the reaction a 4-hydroxy-3-(all-trans-polyprenyl)benzoate + H(+) = a 2-(all-trans-polyprenyl)phenol + CO2. Its pathway is cofactor biosynthesis; ubiquinone biosynthesis. Its function is as follows. Catalyzes the decarboxylation of 3-octaprenyl-4-hydroxy benzoate to 2-octaprenylphenol, an intermediate step in ubiquinone biosynthesis. The sequence is that of 3-octaprenyl-4-hydroxybenzoate carboxy-lyase from Alcanivorax borkumensis (strain ATCC 700651 / DSM 11573 / NCIMB 13689 / SK2).